Reading from the N-terminus, the 543-residue chain is Protein phosphatase 1G (543 aa).

Residue Gly2 is the site of N-myristoyl glycine attachment. Arg22 is subject to Omega-N-methylarginine. Residues 26-503 enclose the PPM-type phosphatase domain; that stretch reads PYGFSAMQGW…DNMTCIIICF (478 aa). Residues Asp60 and Gly61 each coordinate Mn(2+). Disordered regions lie at residues 116-139 and 163-326; these read QIAGRPTEDEDEKEKVADEDDVDN and NCHK…SDSG. At Thr122 the chain carries Phosphothreonine. A compositionally biased stretch (acidic residues) spans 123–139; that stretch reads EDEDEKEKVADEDDVDN. Ser183 is subject to Phosphoserine. Residues 259–310 show a composition bias toward acidic residues; that stretch reads DSEDESDEAEEEEEDSEECSEEEDGYSSEEAENEEDEDDTEEAEEDDEEEEM. Lys381 is modified (N6-acetyllysine). Positions 439 and 494 each coordinate Mn(2+). Residues 508–543 are disordered; sequence TAAPQPESGKRKLEEVLSTEGAEENGNSDKKKAKRD. Ser525 carries the post-translational modification Phosphoserine.

This sequence belongs to the PP2C family. Interacts with NOL3; may dephosphorylate NOL3. Requires Mg(2+) as cofactor. Mn(2+) serves as cofactor.

It localises to the cytoplasm. It is found in the membrane. It carries out the reaction O-phospho-L-seryl-[protein] + H2O = L-seryl-[protein] + phosphate. The catalysed reaction is O-phospho-L-threonyl-[protein] + H2O = L-threonyl-[protein] + phosphate. The sequence is that of Protein phosphatase 1G (PPM1G) from Bos taurus (Bovine).